We begin with the raw amino-acid sequence, 187 residues long: Putative adenylate kinase (187 aa).

ATP is bound by residues glycine 10, glycine 12, lysine 13, threonine 14, and valine 15. Residues 30 to 53 (SLSQFVIENKLYTEYDELRQSYII) are NMP. The interval 103-113 (GRGWADIKVAE) is LID. Arginine 104 is an ATP binding site.

The protein belongs to the adenylate kinase family. AK6 subfamily. Interacts with uS11. Not a structural component of 40S pre-ribosomes, but transiently interacts with them by binding to uS11.

The enzyme catalyses AMP + ATP = 2 ADP. It carries out the reaction ATP + H2O = ADP + phosphate + H(+). Its function is as follows. Broad-specificity nucleoside monophosphate (NMP) kinase that catalyzes the reversible transfer of the terminal phosphate group between nucleoside triphosphates and monophosphates. Also has ATPase activity. Involved in the late maturation steps of the 30S ribosomal particles, specifically 16S rRNA maturation. While NMP activity is not required for ribosome maturation, ATPase activity is. Associates transiently with small ribosomal subunit protein uS11. ATP hydrolysis breaks the interaction with uS11. May temporarily remove uS11 from the ribosome to enable a conformational change of the ribosomal RNA that is needed for the final maturation step of the small ribosomal subunit. The polypeptide is Putative adenylate kinase (Saccharolobus islandicus (strain M.16.4 / Kamchatka #3) (Sulfolobus islandicus)).